The primary structure comprises 352 residues: Anthranilate phosphoribosyltransferase (352 aa).

Residues glycine 94, 97-98 (GS), serine 102, 104-107 (NIST), 122-130 (KHGNRAVSS), and serine 134 contribute to the 5-phospho-alpha-D-ribose 1-diphosphate site. Glycine 94 is an anthranilate binding site. Serine 106 provides a ligand contact to Mg(2+). Asparagine 125 is a binding site for anthranilate. Residue arginine 180 participates in anthranilate binding. Mg(2+) contacts are provided by aspartate 239 and glutamate 240.

The protein belongs to the anthranilate phosphoribosyltransferase family. As to quaternary structure, homodimer. Mg(2+) is required as a cofactor.

It catalyses the reaction N-(5-phospho-beta-D-ribosyl)anthranilate + diphosphate = 5-phospho-alpha-D-ribose 1-diphosphate + anthranilate. The protein operates within amino-acid biosynthesis; L-tryptophan biosynthesis; L-tryptophan from chorismate: step 2/5. Catalyzes the transfer of the phosphoribosyl group of 5-phosphorylribose-1-pyrophosphate (PRPP) to anthranilate to yield N-(5'-phosphoribosyl)-anthranilate (PRA). This is Anthranilate phosphoribosyltransferase from Geobacter sp. (strain M21).